Here is a 206-residue protein sequence, read N- to C-terminus: Glycerol-3-phosphate acyltransferase (206 aa).

Helical transmembrane passes span 14 to 34 (IALA…GLIL), 67 to 87 (ATLL…GYFL), 91 to 111 (AAII…WIGF), 124 to 144 (LLGV…AVAF), and 148 to 168 (YSSL…LILG).

The protein belongs to the PlsY family. Probably interacts with PlsX.

The protein localises to the cell inner membrane. The catalysed reaction is an acyl phosphate + sn-glycerol 3-phosphate = a 1-acyl-sn-glycero-3-phosphate + phosphate. It functions in the pathway lipid metabolism; phospholipid metabolism. In terms of biological role, catalyzes the transfer of an acyl group from acyl-phosphate (acyl-PO(4)) to glycerol-3-phosphate (G3P) to form lysophosphatidic acid (LPA). This enzyme utilizes acyl-phosphate as fatty acyl donor, but not acyl-CoA or acyl-ACP. This chain is Glycerol-3-phosphate acyltransferase, found in Rhizobium etli (strain CIAT 652).